We begin with the raw amino-acid sequence, 435 residues long: MNLHSHSISSLQGALTVPGDKSISHRAAILGGLAEGVTEVDNFLCSEDCLNTLRAMEQLGAKVDVLEERQGYGPVRFRITGVAMSPKAPERPIDCGNSGTGMRLLAGMLAACPFDSEMFGDASLSSRPMGRIMQPLEQMGARIEARGAKPGCAPLSIHGGRVHPISYTLPMASAQVKSAILLAGMFADGTTTVRQPAVTRDHTERLFRHFGVPCTVDGLTVGTCGPALPVAHDLTVPADISSAAFWMVAAASRPGSRLTLRQVGLNKTRNAVISALQRMGARMDIVPTSPEDAGEPYGDITVYGSDSLHGTSLLPEEIPNLIDEIPILAVAGALGRGDFIVRNARELRVKETDRIATTAANLRLMGVDVEEFDDGMVVHGGTPLKGTELSSYGDHRIAMSFLVAGLSAQGETVVTDAECINTSYPGFERDLAQFL.

3-phosphoshikimate is bound by residues K21, S22, and R26. A phosphoenolpyruvate-binding site is contributed by K21. Phosphoenolpyruvate-binding residues include G99 and R127. The 3-phosphoshikimate site is built by S173, Q175, D323, and K350. Q175 contributes to the phosphoenolpyruvate binding site. D323 acts as the Proton acceptor in catalysis. 2 residues coordinate phosphoenolpyruvate: R354 and R396.

The protein belongs to the EPSP synthase family. Monomer.

It localises to the cytoplasm. It carries out the reaction 3-phosphoshikimate + phosphoenolpyruvate = 5-O-(1-carboxyvinyl)-3-phosphoshikimate + phosphate. It functions in the pathway metabolic intermediate biosynthesis; chorismate biosynthesis; chorismate from D-erythrose 4-phosphate and phosphoenolpyruvate: step 6/7. In terms of biological role, catalyzes the transfer of the enolpyruvyl moiety of phosphoenolpyruvate (PEP) to the 5-hydroxyl of shikimate-3-phosphate (S3P) to produce enolpyruvyl shikimate-3-phosphate and inorganic phosphate. The sequence is that of 3-phosphoshikimate 1-carboxyvinyltransferase from Akkermansia muciniphila (strain ATCC BAA-835 / DSM 22959 / JCM 33894 / BCRC 81048 / CCUG 64013 / CIP 107961 / Muc).